A 424-amino-acid chain; its full sequence is UPF0597 protein Shew185_3080 (424 aa).

Belongs to the UPF0597 family.

The chain is UPF0597 protein Shew185_3080 from Shewanella baltica (strain OS185).